The following is a 409-amino-acid chain: Nucleoprotein (409 aa).

Disordered regions lie at residues 1-31 (MASGKAAGKTDAPTPVIKLGGPKPPKVGSSG), 44-84 (LNSP…KGGR), 164-196 (RSGRSTAASSAASSRAPSREVSRGRRSGSEDDL), and 238-258 (VDQVFGPRTKGKEGNFGDDKM). Low complexity predominate over residues 15 to 31 (PVIKLGGPKPPKVGSSG). Positions 29–160 (SSGNVSWFQA…GNFRWDFIPL (132 aa)) are RNA-binding. A CoV N NTD domain is found at 31 to 156 (GNVSWFQAIK…GGPDGNFRWD (126 aa)). Basic residues predominate over residues 70–84 (YWRRQARFKPGKGGR). Residues 166-179 (GRSTAASSAASSRA) are compositionally biased toward low complexity. Basic and acidic residues-rich tracts occupy residues 180 to 192 (PSREVSRGRRSGS) and 247 to 258 (KGKEGNFGDDKM). 2 positions are modified to phosphoserine; by host: serine 190 and serine 192. The CoV N CTD domain maps to 215-331 (TKAKADEMAH…QCVDGVGTRP (117 aa)). The segment at 226–333 (RYCKRTIPPN…VDGVGTRPKD (108 aa)) is dimerization. Cysteines 320 and 323 form a disulfide. The interval 326 to 409 (GVGTRPKDDE…GDSALGENEL (84 aa)) is disordered. Basic residues predominate over residues 358–367 (QRPKKEKKPK). Basic and acidic residues predominate over residues 368 to 384 (KQDDEVDKALTSDEERN). Position 378 is a phosphothreonine; by host (threonine 378). Position 379 is a phosphoserine; by host (serine 379).

This sequence belongs to the gammacoronavirus nucleocapsid protein family. Homooligomer. Both monomeric and oligomeric forms interact with RNA. Interacts with protein M. Interacts with NSP3; this interaction serves to tether the genome to the newly translated replicase-transcriptase complex at a very early stage of infection. Post-translationally, ADP-ribosylated. The ADP-ribosylation is retained in the virion during infection. In terms of processing, phosphorylated on serine and threonine residues.

Its subcellular location is the virion. The protein resides in the host endoplasmic reticulum-Golgi intermediate compartment. It localises to the host Golgi apparatus. Functionally, packages the positive strand viral genome RNA into a helical ribonucleocapsid (RNP) and plays a fundamental role during virion assembly through its interactions with the viral genome and membrane protein M. Plays an important role in enhancing the efficiency of subgenomic viral RNA transcription as well as viral replication. The polypeptide is Nucleoprotein (Gallus gallus (Chicken)).